Here is a 335-residue protein sequence, read N- to C-terminus: Atypical chemokine receptor 1 (335 aa).

Residues 1-62 (MGNCLHPAEL…CNLLDDSALP (62 aa)) lie on the Extracellular side of the membrane. N-linked (GlcNAc...) asparagine glycans are attached at residues Asn-16, Asn-26, and Asn-32. Disulfide bonds link Cys-50–Cys-275 and Cys-128–Cys-194. Residues 63–83 (FFILVSVLGILASGTVLFMFF) form a helical membrane-spanning segment. Residues 84 to 94 (RPLFHWQLCPG) are Cytoplasmic-facing. Residues 95 to 115 (WPVLAQLAVGSALFSIVVPIL) form a helical membrane-spanning segment. The Extracellular segment spans residues 116 to 128 (APGLGNTRSSALC). A helical transmembrane segment spans residues 129-152 (SLGYCVWYGSAFAQALLLGCHASL). Residues 153-165 (GPKLGAGQVPGLT) are Cytoplasmic-facing. The helical transmembrane segment at 166–186 (LGLSVGLWGVAALLTLPITLA) threads the bilayer. Over 187–206 (SGASGGLCTPAYSMELKALQ) the chain is Extracellular. The helical transmembrane segment at 207–227 (ATHAVACLAVFVLLPLGLFGA) threads the bilayer. The Cytoplasmic portion of the chain corresponds to 228-243 (KGLKKALGMGPGPWMN). A helical transmembrane segment spans residues 244 to 264 (ILWAWFIFWWPHGVVLGLDFL). Topologically, residues 265–286 (VRSKLLLLSTCLAQQALDLLLN) are extracellular. The helical transmembrane segment at 287 to 307 (LAEALAILHCVATPLLLALFC) threads the bilayer. At 308–335 (HQATRTLLPSLPLPEGWSSHLDTLGSES) the chain is on the cytoplasmic side.

It belongs to the G-protein coupled receptor 1 family. Atypical chemokine receptor subfamily. (Microbial infection) Interacts (via N-terminal extracellular domain) with Plasmodium knowlesi Duffy receptor alpha form (DBPalpha) (via region II).

It is found in the early endosome. Its subcellular location is the recycling endosome. The protein resides in the membrane. In terms of biological role, atypical chemokine receptor that controls chemokine levels and localization via high-affinity chemokine binding that is uncoupled from classic ligand-driven signal transduction cascades, resulting instead in chemokine sequestration, degradation, or transcytosis. Also known as interceptor (internalizing receptor) or chemokine-scavenging receptor or chemokine decoy receptor. Has a promiscuous chemokine-binding profile, interacting with inflammatory chemokines of both the CXC and the CC subfamilies but not with homeostatic chemokines. Acts as a receptor for chemokines including CCL2, CCL5, CCL7, CCL11, CCL13, CCL14, CCL17, CXCL5, CXCL6, IL8/CXCL8, CXCL11, GRO, RANTES, MCP-1 and TARC. May regulate chemokine bioavailability and, consequently, leukocyte recruitment through two distinct mechanisms: when expressed in endothelial cells, it sustains the abluminal to luminal transcytosis of tissue-derived chemokines and their subsequent presentation to circulating leukocytes; when expressed in erythrocytes, serves as blood reservoir of cognate chemokines but also as a chemokine sink, buffering potential surges in plasma chemokine levels. Functionally, (Microbial infection) Acts as a receptor for the malaria parasite Plasmodium knowlesi. The polypeptide is Atypical chemokine receptor 1 (ACKR1) (Macaca mulatta (Rhesus macaque)).